We begin with the raw amino-acid sequence, 545 residues long: High-molecular-weight cytochrome c (545 aa).

The signal sequence occupies residues 1-31 (MRNGRTLLRWAGVLAATAIIGVGGFWSQGTT). Residues H66, H69, C80, C83, H84, H111, C114, C117, H118, C135, C138, H139, H159, H162, C178, C181, H182, H183, C202, C205, H206, H222, C225, C228, H229, C244, C247, H248, H298, H301, C308, C311, H312, H313, C319, C322, H323, H341, C349, C352, H353, C362, C365, H366, C378, C381, H382, H449, H470, C477, C480, H481, H482, C493, C496, H497, H516, C519, C522, H523, C536, C539, and H540 each contribute to the heme c site.

As to quaternary structure, monomer. Post-translationally, binds 16 heme c groups per subunit. High-spin heme 15 has single axial histidine ligand and the other hemes are low-spin bis-histidinyl coordinated.

It is found in the periplasm. In terms of biological role, HMWC (high-molecular-weight cytochrome c), ORF2, ORF3, ORF4, ORF5 and ORF6 in the HMC operon form a transmembrane protein complex that allows electron flow from the periplasmic hydrogenase to the cytoplasmic enzymes that catalyze reduction of sulfates. In Nitratidesulfovibrio vulgaris (strain ATCC 29579 / DSM 644 / CCUG 34227 / NCIMB 8303 / VKM B-1760 / Hildenborough) (Desulfovibrio vulgaris), this protein is High-molecular-weight cytochrome c (hmcA).